The primary structure comprises 188 residues: dCTP deaminase (188 aa).

DCTP contacts are provided by residues Lys-111–Arg-116, Thr-135–Glu-137, Gln-156, Tyr-170, and Gln-180. The active-site Proton donor/acceptor is the Glu-137.

Belongs to the dCTP deaminase family. As to quaternary structure, homotrimer.

The catalysed reaction is dCTP + H2O + H(+) = dUTP + NH4(+). It participates in pyrimidine metabolism; dUMP biosynthesis; dUMP from dCTP (dUTP route): step 1/2. In terms of biological role, catalyzes the deamination of dCTP to dUTP. The polypeptide is dCTP deaminase (Pseudomonas savastanoi pv. phaseolicola (strain 1448A / Race 6) (Pseudomonas syringae pv. phaseolicola (strain 1448A / Race 6))).